The chain runs to 301 residues: Protein ARMCX6 (301 aa).

The interval 1-6 is mitochondrion outer membrane (MOM)-targeting sequence; the sequence is MGRARE. Over 1–7 the chain is Mitochondrial intermembrane; it reads MGRAREM. Residues 8–25 form a helical; Signal-anchor membrane-spanning segment; that stretch reads GWMAAGLMIGAGACYCMY. The mitochondrion outer membrane (MOM)-targeting sequence stretch occupies residues 26 to 36; that stretch reads KLTMGRSEGNE. Over 26-301 the chain is Cytoplasmic; that stretch reads KLTMGRSEGN…REMLVEAISP (276 aa). The tract at residues 69 to 101 is disordered; the sequence is WSEDGDWDEPGAPGGTEDRRSGGGKANRAHPIK.

The protein belongs to the eutherian X-chromosome-specific Armcx family. As to expression, highly expressed in the developing neural tissues, neural crest derivatives and hind limbs. Also widely expressed in the adult nervous tissue, especially in the forebrain, including the cerebral cortex, hippocampus and thalamus.

The protein localises to the mitochondrion. Its subcellular location is the mitochondrion outer membrane. Its function is as follows. May regulate the dynamics and distribution of mitochondria in neural cells. This chain is Protein ARMCX6 (Armcx6), found in Mus musculus (Mouse).